The primary structure comprises 221 residues: PKHD-type hydroxylase Pro_1271 (221 aa).

In terms of domain architecture, Fe2OG dioxygenase spans 80–174 (KVHGVMFSKS…RIVCVGWIQS (95 aa)). Fe cation is bound by residues His-98, Asp-100, and His-155. Arg-165 provides a ligand contact to 2-oxoglutarate.

It depends on Fe(2+) as a cofactor. The cofactor is L-ascorbate.

In Prochlorococcus marinus (strain SARG / CCMP1375 / SS120), this protein is PKHD-type hydroxylase Pro_1271.